We begin with the raw amino-acid sequence, 89 residues long: Co-chaperonin GroES (89 aa).

The protein belongs to the GroES chaperonin family. Heptamer of 7 subunits arranged in a ring. Interacts with the chaperonin GroEL.

The protein resides in the cytoplasm. In terms of biological role, together with the chaperonin GroEL, plays an essential role in assisting protein folding. The GroEL-GroES system forms a nano-cage that allows encapsulation of the non-native substrate proteins and provides a physical environment optimized to promote and accelerate protein folding. GroES binds to the apical surface of the GroEL ring, thereby capping the opening of the GroEL channel. This is Co-chaperonin GroES from Parabacteroides distasonis (strain ATCC 8503 / DSM 20701 / CIP 104284 / JCM 5825 / NCTC 11152).